A 107-amino-acid chain; its full sequence is MFGYAVRRALRKSKTLRYGVPMLLLIVGGSFGLREFSQIRYDAVKIKIDPELEKKLKMNKVSLESEYEKIKDSTFDDWKNIRGPRPWEDPDLLQGRNPEILKTNKTT.

Residues 1-14 are Mitochondrial matrix-facing; that stretch reads MFGYAVRRALRKSK. A helical transmembrane segment spans residues 15–37; the sequence is TLRYGVPMLLLIVGGSFGLREFS. Residues 38–107 lie on the Mitochondrial intermembrane side of the membrane; that stretch reads QIRYDAVKIK…PEILKTNKTT (70 aa). The tract at residues 80–107 is disordered; that stretch reads NIRGPRPWEDPDLLQGRNPEILKTNKTT.

This sequence belongs to the COX16 family. As to quaternary structure, associates with the MITRAC complex. Interacts with MT-CO2/COX; specifically interacts with newly synthesized MT-CO2/COX. Interacts with SCO1, SCO2 and COA6.

The protein localises to the mitochondrion inner membrane. Its function is as follows. Required for the assembly of the mitochondrial respiratory chain complex IV (CIV), also known as cytochrome c oxidase. Promotes the insertion of copper into the active site of cytochrome c oxidase subunit II (MT-CO2/COX2). Interacts specifically with newly synthesized MT-CO2/COX and its copper center-forming metallochaperones SCO1, SCO2 and COA6. Probably facilitates MT-CO2/COX2 association with the MITRAC assembly intermediate containing MT-CO1/COX1, thereby participating in merging the MT-CO1/COX1 and MT-CO2/COX2 assembly lines. This Bos taurus (Bovine) protein is Cytochrome c oxidase assembly protein COX16 homolog, mitochondrial.